A 304-amino-acid polypeptide reads, in one-letter code: Probable aspartoacylase (304 aa).

Residues His13 and Glu16 each coordinate Zn(2+). Substrate-binding positions include Arg55 and 62-63; that span reads NR. His104 serves as a coordination point for Zn(2+). Positions 162 and 272 each coordinate substrate.

It belongs to the AspA/AstE family. Aspartoacylase subfamily. Zn(2+) is required as a cofactor.

It catalyses the reaction an N-acyl-L-aspartate + H2O = a carboxylate + L-aspartate. The chain is Probable aspartoacylase from Synechococcus sp. (strain CC9605).